Here is a 430-residue protein sequence, read N- to C-terminus: Histidinol dehydrogenase (430 aa).

Positions 130, 191, and 214 each coordinate NAD(+). Substrate is bound by residues Ser237, Gln259, and His262. Residues Gln259 and His262 each coordinate Zn(2+). Residues Glu327 and His328 each act as proton acceptor in the active site. Substrate contacts are provided by His328, Asp361, Glu415, and His420. Zn(2+) is bound at residue Asp361. His420 is a Zn(2+) binding site.

This sequence belongs to the histidinol dehydrogenase family. It depends on Zn(2+) as a cofactor.

The enzyme catalyses L-histidinol + 2 NAD(+) + H2O = L-histidine + 2 NADH + 3 H(+). Its pathway is amino-acid biosynthesis; L-histidine biosynthesis; L-histidine from 5-phospho-alpha-D-ribose 1-diphosphate: step 9/9. Its function is as follows. Catalyzes the sequential NAD-dependent oxidations of L-histidinol to L-histidinaldehyde and then to L-histidine. The chain is Histidinol dehydrogenase from Brucella abortus (strain 2308).